The sequence spans 318 residues: HPr kinase/phosphorylase (318 aa).

Residues histidine 146 and lysine 167 contribute to the active site. Residue 161–168 (GESGLGKS) participates in ATP binding. Residue serine 168 participates in Mg(2+) binding. The Proton acceptor; for phosphorylation activity. Proton donor; for dephosphorylation activity role is filled by aspartate 185. The important for the catalytic mechanism of both phosphorylation and dephosphorylation stretch occupies residues 209–218 (LEVRGIGLLD). Glutamate 210 lines the Mg(2+) pocket. Arginine 252 is a catalytic residue. Positions 273 to 278 (QVVAGR) are important for the catalytic mechanism of dephosphorylation.

It belongs to the HPrK/P family. In terms of assembly, homohexamer. Mg(2+) is required as a cofactor.

The catalysed reaction is [HPr protein]-L-serine + ATP = [HPr protein]-O-phospho-L-serine + ADP + H(+). The enzyme catalyses [HPr protein]-O-phospho-L-serine + phosphate + H(+) = [HPr protein]-L-serine + diphosphate. In terms of biological role, catalyzes the ATP- as well as the pyrophosphate-dependent phosphorylation of a specific serine residue in HPr, a phosphocarrier protein of the phosphoenolpyruvate-dependent sugar phosphotransferase system (PTS). HprK/P also catalyzes the pyrophosphate-producing, inorganic phosphate-dependent dephosphorylation (phosphorolysis) of seryl-phosphorylated HPr (P-Ser-HPr). The protein is HPr kinase/phosphorylase of Verminephrobacter eiseniae (strain EF01-2).